The primary structure comprises 686 residues: Homoaconitase, mitochondrial (686 aa).

The transit peptide at 1–17 (MRVVRCVRRFSASRAVS) directs the protein to the mitochondrion. 3 residues coordinate [4Fe-4S] cluster: Cys-337, Cys-401, and Cys-404.

The protein belongs to the aconitase/IPM isomerase family. It depends on [4Fe-4S] cluster as a cofactor.

Its subcellular location is the mitochondrion. The enzyme catalyses (2R,3S)-homoisocitrate = cis-homoaconitate + H2O. Its pathway is amino-acid biosynthesis; L-lysine biosynthesis via AAA pathway; L-alpha-aminoadipate from 2-oxoglutarate: step 3/5. In terms of biological role, catalyzes the reversible hydration of cis-homoaconitate to (2R,3S)-homoisocitrate, a step in the alpha-aminoadipate pathway for lysine biosynthesis. This is Homoaconitase, mitochondrial (LYS4) from Eremothecium gossypii (strain ATCC 10895 / CBS 109.51 / FGSC 9923 / NRRL Y-1056) (Yeast).